The primary structure comprises 211 residues: N-(5'-phosphoribosyl)anthranilate isomerase (211 aa).

It belongs to the TrpF family.

The enzyme catalyses N-(5-phospho-beta-D-ribosyl)anthranilate = 1-(2-carboxyphenylamino)-1-deoxy-D-ribulose 5-phosphate. It functions in the pathway amino-acid biosynthesis; L-tryptophan biosynthesis; L-tryptophan from chorismate: step 3/5. The sequence is that of N-(5'-phosphoribosyl)anthranilate isomerase from Methanococcus maripaludis (strain C6 / ATCC BAA-1332).